Here is a 326-residue protein sequence, read N- to C-terminus: Target of rapamycin complex subunit LST8 (326 aa).

Met-1 is subject to N-acetylmethionine. WD repeat units follow at residues 1-37, 40-80, 83-122, 126-165, and 168-207; these read MNTT…CTRT, HQDS…PIIS, GVSK…LQCQ, QVNA…NEQL, and EPES…GDDV. Phosphothreonine is present on Thr-51. Residue Lys-86 forms a Glycyl lysine isopeptide (Lys-Gly) (interchain with G-Cter in SUMO3) linkage. Residues Lys-215, Lys-245, and Lys-261 each participate in a glycyl lysine isopeptide (Lys-Gly) (interchain with G-Cter in SUMO3) cross-link. The WD 6 repeat unit spans residues 218–257; that stretch reads AHTRYALQCRFSPDSTLLATCSADQTCKIWRTSNFSLMTE. Residues 268-309 form a WD 7 repeat; that stretch reads SSRGWMWGCAFSGDSQYIVTASSDNLARLWCVETGEIKREYG. A Glycyl lysine isopeptide (Lys-Gly) (interchain with G-Cter in SUMO3); alternate cross-link involves residue Lys-305. Residues Lys-305 and Lys-313 each participate in a glycyl lysine isopeptide (Lys-Gly) (interchain with G-Cter in ubiquitin); alternate cross-link. Lys-313 is covalently cross-linked (Glycyl lysine isopeptide (Lys-Gly) (interchain with G-Cter in SUMO1); alternate).

The protein belongs to the WD repeat LST8 family. In terms of assembly, part of the mechanistic target of rapamycin complex 1 (mTORC1) which contains MTOR, MLST8 and RPTOR. mTORC1 associates with AKT1S1/PRAS40, which inhibits its activity. mTORC1 binds to and is inhibited by FKBP12-rapamycin. Within mTORC1, interacts directly with MTOR and RPTOR. Component of the mechanistic target of rapamycin complex 2 (mTORC2), consisting in two heterotretramers composed of MTOR, MLST8, RICTOR and MAPKAP1/SIN1. Contrary to mTORC1, mTORC2 does not bind to and is not sensitive to FKBP12-rapamycin. mTORC1 and mTORC2 associate with DEPTOR, which regulates their activity. Interacts with RHEB. Interacts with MEAK7. Interacts with SIK3. Interacts with SLC38A7; this interaction promotes the recruitment of mTORC1 to the lysosome and its subsequent activation. Post-translationally, phosphorylation at Thr-51 by CDK1 promotes ubiquitination by the SCF(FBXW7) complex, followed by degradation. Ubiquitination by the SCF(FBXW7) and SCF(FBXW11) complexes following phosphorylation at Thr-51 by CDK1, leads to its degradation by the proteasome. Ubiquitination at Lys-305 and Lys-313 by TRAF2 via 'Lys-63'-linked polyubiquitin chains inhibits formation of the mTORC2 complex, while promoting formation of the mTORC1 complex: ubiquitination disrupts the interaction between MLST8 and MAPKAP1/SIN1 to favor mTORC1 assembly. Deubiquitination at Lys-305 and Lys-313 by OTUD7B promotes MLST8 interaction with MAPKAP1/SIN1, facilitating mTORC2 assembly. In terms of processing, sumoylation with SUMO1, SUMO2 and SUMO3 promotes assembly of both mTORC1 and mTORC2 complexes.

The protein localises to the lysosome membrane. Its subcellular location is the cytoplasm. Functionally, subunit of both mTORC1 and mTORC2, which regulates cell growth and survival in response to nutrient and hormonal signals. mTORC1 is activated in response to growth factors or amino acids. In response to nutrients, mTORC1 is recruited to the lysosome membrane and promotes protein, lipid and nucleotide synthesis by phosphorylating several substrates, such as ribosomal protein S6 kinase (RPS6KB1 and RPS6KB2) and EIF4EBP1 (4E-BP1). In the same time, it inhibits catabolic pathways by phosphorylating the autophagy initiation components ULK1 and ATG13, as well as transcription factor TFEB, a master regulators of lysosomal biogenesis and autophagy. The mTORC1 complex is inhibited in response to starvation and amino acid depletion. Within mTORC1, MLST8 interacts directly with MTOR and enhances its kinase activity. In nutrient-poor conditions, stabilizes the MTOR-RPTOR interaction and favors RPTOR-mediated inhibition of MTOR activity. As part of the mTORC2 complex, transduces signals from growth factors to pathways involved in proliferation, cytoskeletal organization, lipogenesis and anabolic output. mTORC2 is also activated by growth factors, but seems to be nutrient-insensitive. In response to growth factors, mTORC2 phosphorylates and activates AGC protein kinase family members, including AKT (AKT1, AKT2 and AKT3), PKC (PRKCA, PRKCB and PRKCE) and SGK1. mTORC2 functions upstream of Rho GTPases to regulate the actin cytoskeleton, probably by activating one or more Rho-type guanine nucleotide exchange factors. mTORC2 promotes the serum-induced formation of stress-fibers or F-actin. mTORC2 plays a critical role in AKT1 activation by mediating phosphorylation of different sites depending on the context, such as 'Thr-450', 'Ser-473', 'Ser-477' or 'Thr-479', facilitating the phosphorylation of the activation loop of AKT1 on 'Thr-308' by PDPK1/PDK1 which is a prerequisite for full activation. mTORC2 regulates the phosphorylation of SGK1 at 'Ser-422'. mTORC2 also modulates the phosphorylation of PRKCA on 'Ser-657'. Within mTORC2, MLST8 acts as a bridge between MAPKAP1/SIN1 and MTOR. This Mus musculus (Mouse) protein is Target of rapamycin complex subunit LST8.